The sequence spans 451 residues: Tryptophan--tRNA ligase (451 aa).

Residues 10–12 (TTT) and 18–19 (GN) each bind ATP. The 'HIGH' region motif lies at 11–19 (TTGTPHLGN). Asp-143 is an L-tryptophan binding site. ATP contacts are provided by residues 155 to 157 (GRD), Leu-195, and 202 to 206 (KMSKS). Positions 202–206 (KMSKS) match the 'KMSKS' region motif.

This sequence belongs to the class-I aminoacyl-tRNA synthetase family. Homodimer.

It is found in the cytoplasm. It catalyses the reaction tRNA(Trp) + L-tryptophan + ATP = L-tryptophyl-tRNA(Trp) + AMP + diphosphate + H(+). Functionally, catalyzes the attachment of tryptophan to tRNA(Trp). The chain is Tryptophan--tRNA ligase from Bordetella pertussis (strain Tohama I / ATCC BAA-589 / NCTC 13251).